Here is a 667-residue protein sequence, read N- to C-terminus: Smc-like protein Sph2 (667 aa).

Coiled coils occupy residues 153 to 295 (GSIQ…SLAT) and 355 to 517 (GRLD…AITA).

The protein belongs to the Sph1/Sph2 family.

The protein localises to the cytoplasm. May play a role in replication. The sequence is that of Smc-like protein Sph2 (sph2) from Halobacterium salinarum (strain ATCC 29341 / DSM 671 / R1).